We begin with the raw amino-acid sequence, 539 residues long: Serine/threonine-protein kinase BUR1 (539 aa).

The span at 1 to 15 shows a compositional bias: polar residues; the sequence is MEKLSETTPNGTSPR. Residues 1 to 27 form a disordered region; that stretch reads MEKLSETTPNGTSPRTFALNHSRPRSS. One can recognise a Protein kinase domain in the interval 37–339; that stretch reads YELLGKLGEG…AVDALQHPWF (303 aa). ATP-binding positions include 43 to 51 and Lys66; that span reads LGEGTFGEV. Catalysis depends on Asp169, which acts as the Proton acceptor. The interval 370–539 is disordered; sequence AALPPAPKGG…DRPDHNGYRR (170 aa). Basic and acidic residues-rich tracts occupy residues 414–428, 471–514, and 521–539; these read NGPDDRRPAWQRERG, NRDD…DRGT, and PRHDRSRDRDRPDHNGYRR.

The protein belongs to the protein kinase superfamily. CMGC Ser/Thr protein kinase family. CDC2/CDKX subfamily.

The protein resides in the nucleus. The catalysed reaction is L-seryl-[protein] + ATP = O-phospho-L-seryl-[protein] + ADP + H(+). It catalyses the reaction L-threonyl-[protein] + ATP = O-phospho-L-threonyl-[protein] + ADP + H(+). It carries out the reaction [DNA-directed RNA polymerase] + ATP = phospho-[DNA-directed RNA polymerase] + ADP + H(+). Its function is as follows. Serine/threonine-protein kinase involved in transcription regulation. Phosphorylates the UBC2/RAD6 ubiquitin-conjugating enzyme (E2), leading to monoubiquitination of histone H2B and the silencing of telomeric-associated genes. Also required for histone H3 methylation. Necessary for the recovery from pheromone-induced growth arrest in the cell cycle G1 phase. This is Serine/threonine-protein kinase BUR1 (BUR1) from Gibberella zeae (strain ATCC MYA-4620 / CBS 123657 / FGSC 9075 / NRRL 31084 / PH-1) (Wheat head blight fungus).